Consider the following 502-residue polypeptide: Protein IWS1 homolog 1 (502 aa).

A compositionally biased stretch (basic and acidic residues) spans 1-12; sequence MGFEDDPYRDVD. Disordered stretches follow at residues 1–61 and 87–208; these read MGFE…DNDK and DEDV…DEDE. Acidic residues-rich tracts occupy residues 13 to 22, 34 to 49, and 87 to 97; these read GEPIVDFDDF, QDFDEDLADDIGDWDG, and DEDVDDAEFDE. Basic and acidic residues-rich tracts occupy residues 138 to 151 and 181 to 194; these read NRGERKSEEIDEMW and PSERYGGDAGDRSP. Tyrosine 185 is subject to Phosphotyrosine. One can recognise a TFIIS N-terminal domain in the interval 287-370; the sequence is TLLKNWLEPL…DKWSRPIFNK (84 aa). The tract at residues 385–434 is disordered; the sequence is VPYRRPPVKKPSNKATMESRDGDFDLEIRERKTGLTSGQSSRGDRQMTMR. Residues 401–417 show a composition bias toward basic and acidic residues; sequence MESRDGDFDLEIRERKT.

This sequence belongs to the IWS1 family. In terms of assembly, interacts with BZR2/BES1 and SPT6 (via N-terminus). Interacts with ASHH2/SDG8.

It localises to the nucleus. Functionally, transcription factor involved in RNA polymerase II (RNAPII) transcription regulation. Involved in transcription elongation. May function at post-recruitment and elongation steps of transcription. May be recruited by BZR2/BES1 to target genes and promote their expression during transcription elongation process. Required for brassinosteroid (BR)-induced gene expression. Required the for regulation of numerous nitrogen-responsive genes in roots. Acts in roots to repress NRT2.1 transcription in response to high nitrogen supply. This repression is associated with an IWS1-dependent increase of trimethylation on 'Lys-27' H3K27me3 at the NRT2.1 locus. This chain is Protein IWS1 homolog 1, found in Arabidopsis thaliana (Mouse-ear cress).